Consider the following 327-residue polypeptide: Inactive peptidyl-prolyl cis-trans isomerase FKBP6 (327 aa).

The 90-residue stretch at 54–143 (DASVLVKYSG…LFEIELLDFL (90 aa)) folds into the PPIase FKBP-type domain. 3 TPR repeats span residues 171–204 (AATE…LRRR), 219–252 (LPVL…DQKN), and 253–286 (AKAL…QPFN).

Belongs to the FKBP6 family. Interacts (via TPR repeats) with HSP90. Interacts with HSP72/HSPA2 and CLTC. Interacts with GAPDH; leading to inhibit GAPDH catalytic activity. In terms of tissue distribution, detected in all tissues examined, with higher expression in testis, heart, skeletal muscle, liver, and kidney.

It localises to the cytoplasm. The protein localises to the nucleus. Functionally, has an essential role in spermatogenesis. It is required to repress transposable elements and prevent their mobilization, which is essential for the germline integrity. Acts via the piRNA metabolic process, which mediates the repression of transposable elements during meiosis by forming complexes composed of piRNAs and Piwi proteins and govern the methylation and subsequent repression of transposons. Acts as a co-chaperone via its interaction with HSP90 and is required for the piRNA amplification process, the secondary piRNA biogenesis. May be required together with HSP90 in removal of 16 nucleotide ping-pong by-products from Piwi complexes, possibly facilitating turnover of Piwi complexes. This is Inactive peptidyl-prolyl cis-trans isomerase FKBP6 (FKBP6) from Homo sapiens (Human).